Reading from the N-terminus, the 450-residue chain is Tubulin alpha chain (450 aa).

Glutamine 11 lines the GTP pocket. Lysine 40 carries the post-translational modification N6-acetyllysine. GTP-binding residues include glutamate 71, serine 140, glycine 144, threonine 145, threonine 179, asparagine 206, and asparagine 228. Glutamate 71 contacts Mg(2+). The active site involves glutamate 254.

This sequence belongs to the tubulin family. Dimer of alpha and beta chains. A typical microtubule is a hollow water-filled tube with an outer diameter of 25 nm and an inner diameter of 15 nM. Alpha-beta heterodimers associate head-to-tail to form protofilaments running lengthwise along the microtubule wall with the beta-tubulin subunit facing the microtubule plus end conferring a structural polarity. Microtubules usually have 13 protofilaments but different protofilament numbers can be found in some organisms and specialized cells. The cofactor is Mg(2+). In terms of processing, undergoes a tyrosination/detyrosination cycle, the cyclic removal and re-addition of a C-terminal tyrosine residue by the enzymes tubulin tyrosine carboxypeptidase (TTCP) and tubulin tyrosine ligase (TTL), respectively. Acetylation of alpha chains at Lys-40 stabilizes microtubules and affects affinity and processivity of microtubule motors. This modification has a role in multiple cellular functions, ranging from cell motility, cell cycle progression or cell differentiation to intracellular trafficking and signaling.

The protein resides in the cytoplasm. Its subcellular location is the cytoskeleton. The catalysed reaction is GTP + H2O = GDP + phosphate + H(+). Its function is as follows. Tubulin is the major constituent of microtubules, a cylinder consisting of laterally associated linear protofilaments composed of alpha- and beta-tubulin heterodimers. Microtubules grow by the addition of GTP-tubulin dimers to the microtubule end, where a stabilizing cap forms. Below the cap, tubulin dimers are in GDP-bound state, owing to GTPase activity of alpha-tubulin. In Lepidoglyphus destructor (Storage mite), this protein is Tubulin alpha chain.